The primary structure comprises 128 residues: Crossover junction endodeoxyribonuclease Hjc (128 aa).

Glutamate 10 contributes to the Mg(2+) binding site. Serine 30 is an active-site residue. Residues aspartate 34 and glutamate 47 each coordinate Mg(2+).

It belongs to the Holliday junction resolvase Hjc family. As to quaternary structure, homodimer. The cofactor is Mg(2+).

The enzyme catalyses Endonucleolytic cleavage at a junction such as a reciprocal single-stranded crossover between two homologous DNA duplexes (Holliday junction).. Functionally, a structure-specific endonuclease that resolves Holliday junction (HJ) intermediates during genetic recombination. Cleaves 4-way DNA junctions introducing paired nicks in opposing strands, leaving a 5'-terminal phosphate and a 3'-terminal hydroxyl group that are subsequently ligated to produce recombinant products. This Thermococcus kodakarensis (strain ATCC BAA-918 / JCM 12380 / KOD1) (Pyrococcus kodakaraensis (strain KOD1)) protein is Crossover junction endodeoxyribonuclease Hjc.